The primary structure comprises 487 residues: Transcription factor GTE5, chloroplastic (487 aa).

The N-terminal 32 residues, 1–32, are a transit peptide targeting the chloroplast; it reads MSSEHISGGGASKTKKHKWSSSQNRPKPMGVS. 3 disordered regions span residues 1–48, 93–127, and 400–487; these read MSSE…NSFA, ANPG…GADK, and KNEA…DNGN. The Bromo domain occupies 127–233; that stretch reads KGTVQIFKNC…NMFEDKWVSI (107 aa). In terms of domain architecture, NET spans 320-401; it reads EEEAPVNNRD…GYKESLSKKN (82 aa). Residues 400–414 are compositionally biased toward basic and acidic residues; it reads KNEAHGFGSERDAES. The span at 415 to 435 shows a compositional bias: polar residues; sequence VHNSIQEPTTLVSGTTTSRVT. Residues 451–487 show a composition bias toward low complexity; it reads NNASGSSSSNSSSSDSGSCSSDTDSDSSSGRGSDNGN.

Interacts with SIZ1 (via PHD domain). Sumoylated by SIZ1.

The protein resides in the plastid. It is found in the chloroplast. The sequence is that of Transcription factor GTE5, chloroplastic (GTE5) from Arabidopsis thaliana (Mouse-ear cress).